A 623-amino-acid chain; its full sequence is Glutathione import ATP-binding protein GsiA (623 aa).

ABC transporter domains are found at residues 15 to 269 (VSGL…QTLL) and 325 to 564 (LRSG…RKLM). ATP is bound by residues 49–56 (GESGSGKS) and 357–364 (GESGSGKS).

Belongs to the ABC transporter superfamily. Glutathione importer (TC 3.A.1.5.11) family. As to quaternary structure, the complex is composed of two ATP-binding proteins (GsiA), two transmembrane proteins (GsiC and GsiD) and a solute-binding protein (GsiB).

The protein localises to the cell inner membrane. The enzyme catalyses glutathione(out) + ATP + H2O = glutathione(in) + ADP + phosphate + H(+). Part of the ABC transporter complex GsiABCD involved in glutathione import. Responsible for energy coupling to the transport system. The polypeptide is Glutathione import ATP-binding protein GsiA (Salmonella typhi).